A 122-amino-acid chain; its full sequence is Small ribosomal subunit protein uS13 (122 aa).

A disordered region spans residues 94-122 (KGLPVRGQRTHTNARTRKGPRRAIAGKKK).

This sequence belongs to the universal ribosomal protein uS13 family. As to quaternary structure, part of the 30S ribosomal subunit. Forms a loose heterodimer with protein S19. Forms two bridges to the 50S subunit in the 70S ribosome.

Its function is as follows. Located at the top of the head of the 30S subunit, it contacts several helices of the 16S rRNA. In the 70S ribosome it contacts the 23S rRNA (bridge B1a) and protein L5 of the 50S subunit (bridge B1b), connecting the 2 subunits; these bridges are implicated in subunit movement. Contacts the tRNAs in the A and P-sites. The sequence is that of Small ribosomal subunit protein uS13 from Syntrophus aciditrophicus (strain SB).